We begin with the raw amino-acid sequence, 142 residues long: Large ribosomal subunit protein uL13 (142 aa).

This sequence belongs to the universal ribosomal protein uL13 family. As to quaternary structure, part of the 50S ribosomal subunit.

This protein is one of the early assembly proteins of the 50S ribosomal subunit, although it is not seen to bind rRNA by itself. It is important during the early stages of 50S assembly. The polypeptide is Large ribosomal subunit protein uL13 (Ruthia magnifica subsp. Calyptogena magnifica).